The primary structure comprises 1173 residues: Alpha-mannosidase 2 (1173 aa).

The tract at residues 1 to 21 (MPFSSYIGNSRRSSTGGGTGG) is disordered. Residues 1–50 (MPFSSYIGNSRRSSTGGGTGGWGQSLLPTALSKSKLAINRKPRKRTLVVN) lie on the Cytoplasmic side of the membrane. Residues 51 to 71 (FIFANFFVIALTVSLLFFLLT) traverse the membrane as a helical; Signal-anchor segment. At 72-1173 (LFHFGVPGPI…AYKLELRPHK (1102 aa)) the chain is on the lumenal side. Residue asparagine 106 is glycosylated (N-linked (GlcNAc...) asparagine). Zn(2+) is bound by residues histidine 162 and aspartate 164. Residue asparagine 262 is glycosylated (N-linked (GlcNAc...) asparagine). Aspartate 276 is a binding site for Zn(2+). Aspartate 276 functions as the Nucleophile in the catalytic mechanism. An N-linked (GlcNAc...) asparagine glycan is attached at asparagine 467. Residue histidine 564 participates in Zn(2+) binding. Residues asparagine 675, asparagine 772, asparagine 782, asparagine 991, asparagine 1098, and asparagine 1108 are each glycosylated (N-linked (GlcNAc...) asparagine).

The protein belongs to the glycosyl hydrolase 38 family. As to quaternary structure, homodimer; disulfide-linked. Interacts with GALT1. It depends on Zn(2+) as a cofactor. Glycosylated.

The protein resides in the golgi apparatus membrane. The enzyme catalyses N(4)-{beta-D-GlcNAc-(1-&gt;2)-alpha-D-Man-(1-&gt;3)-[alpha-D-Man-(1-&gt;3)-[alpha-D-Man-(1-&gt;6)]-alpha-D-Man-(1-&gt;6)]-beta-D-Man-(1-&gt;4)-beta-D-GlcNAc-(1-&gt;4)-beta-D-GlcNAc}-L-asparaginyl-[protein] + 2 H2O = 2 alpha-D-mannopyranose + an N(4)-{beta-D-GlcNAc-(1-&gt;2)-alpha-D-Man-(1-&gt;3)-[alpha-D-Man-(1-&gt;6)]-beta-D-Man-(1-&gt;4)-beta-D-GlcNAc-(1-&gt;4)-beta-D-GlcNAc}-L-asparaginyl-[protein]. It functions in the pathway protein modification; protein glycosylation. With respect to regulation, inhibited by 1 mM Cu(2+) and by the class II alpha-mannosidase inhibitor swainsonine. Functionally, catalyzes the first committed step in the biosynthesis of complex N-glycans. It controls conversion of high mannose to complex N-glycans; the final hydrolytic step in the N-glycan maturation pathway. Converts GlcNAcMan(5)GlcNAc(2) (Man5Gn) into GlcNAcMan(3)GlcNAc(2) (MGn) by sequential removal of two alpha1,6- and alpha1,3-linked mannose residues from the alpha1,6-mannose branch of the substrate. To a lesser extent, also able to cleave beta1,2-xylosylated Man5Gn-glycopeptide (Man5GnX-GP) and pyridylaminated substrates Man5Gn-PA and Man5GnX-PA, but not active toward Man5-glycopeptide. Required for resistance to salt stress. The protein is Alpha-mannosidase 2 of Arabidopsis thaliana (Mouse-ear cress).